A 242-amino-acid polypeptide reads, in one-letter code: Small ribosomal subunit protein uS2 (242 aa).

This sequence belongs to the universal ribosomal protein uS2 family.

The polypeptide is Small ribosomal subunit protein uS2 (Shewanella putrefaciens (strain CN-32 / ATCC BAA-453)).